The following is a 181-amino-acid chain: Photosystem I assembly protein Ycf4 (181 aa).

The next 2 membrane-spanning stretches (helical) occupy residues 19–41 and 61–83; these read YFWA…SSYF and LVMS…TLFW.

Belongs to the Ycf4 family.

Its subcellular location is the plastid. The protein resides in the chloroplast thylakoid membrane. In terms of biological role, seems to be required for the assembly of the photosystem I complex. This Trieres chinensis (Marine centric diatom) protein is Photosystem I assembly protein Ycf4.